The chain runs to 276 residues: Ribosomal RNA small subunit methyltransferase A (276 aa).

S-adenosyl-L-methionine contacts are provided by Asn-27, Leu-29, Gly-54, Glu-75, Asp-101, and Asn-122.

Belongs to the class I-like SAM-binding methyltransferase superfamily. rRNA adenine N(6)-methyltransferase family. RsmA subfamily.

It localises to the cytoplasm. It catalyses the reaction adenosine(1518)/adenosine(1519) in 16S rRNA + 4 S-adenosyl-L-methionine = N(6)-dimethyladenosine(1518)/N(6)-dimethyladenosine(1519) in 16S rRNA + 4 S-adenosyl-L-homocysteine + 4 H(+). In terms of biological role, specifically dimethylates two adjacent adenosines (A1518 and A1519) in the loop of a conserved hairpin near the 3'-end of 16S rRNA in the 30S particle. May play a critical role in biogenesis of 30S subunits. The protein is Ribosomal RNA small subunit methyltransferase A of Brucella melitensis biotype 1 (strain ATCC 23456 / CCUG 17765 / NCTC 10094 / 16M).